Here is a 361-residue protein sequence, read N- to C-terminus: Chorismate synthase (361 aa).

Arginine 48 is an NADP(+) binding site. FMN is bound by residues 126–128 (RSS), glycine 269, 302–306 (KPVPS), and asparagine 328.

Belongs to the chorismate synthase family. Homotetramer. The cofactor is FMNH2.

The enzyme catalyses 5-O-(1-carboxyvinyl)-3-phosphoshikimate = chorismate + phosphate. The protein operates within metabolic intermediate biosynthesis; chorismate biosynthesis; chorismate from D-erythrose 4-phosphate and phosphoenolpyruvate: step 7/7. Its function is as follows. Catalyzes the anti-1,4-elimination of the C-3 phosphate and the C-6 proR hydrogen from 5-enolpyruvylshikimate-3-phosphate (EPSP) to yield chorismate, which is the branch point compound that serves as the starting substrate for the three terminal pathways of aromatic amino acid biosynthesis. This reaction introduces a second double bond into the aromatic ring system. The sequence is that of Chorismate synthase from Treponema denticola (strain ATCC 35405 / DSM 14222 / CIP 103919 / JCM 8153 / KCTC 15104).